The chain runs to 271 residues: Pyrroline-5-carboxylate reductase (271 aa).

It belongs to the pyrroline-5-carboxylate reductase family.

The protein resides in the cytoplasm. It catalyses the reaction L-proline + NADP(+) = (S)-1-pyrroline-5-carboxylate + NADPH + 2 H(+). The catalysed reaction is L-proline + NAD(+) = (S)-1-pyrroline-5-carboxylate + NADH + 2 H(+). It participates in amino-acid biosynthesis; L-proline biosynthesis; L-proline from L-glutamate 5-semialdehyde: step 1/1. In terms of biological role, catalyzes the reduction of 1-pyrroline-5-carboxylate (PCA) to L-proline. The protein is Pyrroline-5-carboxylate reductase of Staphylococcus epidermidis (strain ATCC 35984 / DSM 28319 / BCRC 17069 / CCUG 31568 / BM 3577 / RP62A).